Reading from the N-terminus, the 425-residue chain is Light-independent protochlorophyllide reductase subunit N (425 aa).

Cysteine 17, cysteine 42, and cysteine 103 together coordinate [4Fe-4S] cluster.

Belongs to the BchN/ChlN family. Protochlorophyllide reductase is composed of three subunits; ChlL, ChlN and ChlB. Forms a heterotetramer of two ChlB and two ChlN subunits. [4Fe-4S] cluster serves as cofactor.

The enzyme catalyses chlorophyllide a + oxidized 2[4Fe-4S]-[ferredoxin] + 2 ADP + 2 phosphate = protochlorophyllide a + reduced 2[4Fe-4S]-[ferredoxin] + 2 ATP + 2 H2O. The protein operates within porphyrin-containing compound metabolism; chlorophyll biosynthesis (light-independent). Its function is as follows. Component of the dark-operative protochlorophyllide reductase (DPOR) that uses Mg-ATP and reduced ferredoxin to reduce ring D of protochlorophyllide (Pchlide) to form chlorophyllide a (Chlide). This reaction is light-independent. The NB-protein (ChlN-ChlB) is the catalytic component of the complex. In Parasynechococcus marenigrum (strain WH8102), this protein is Light-independent protochlorophyllide reductase subunit N.